The chain runs to 193 residues: uncharacterized protein (193 aa).

Residues 153-170 (WRYWAVIALIAAVLIYLY) form a helical membrane-spanning segment.

It is found in the membrane. This is an uncharacterized protein from Invertebrate iridescent virus 6 (IIV-6).